A 292-amino-acid chain; its full sequence is Oxidative stress-responsive serine-rich protein 1 (292 aa).

A disordered region spans residues 27 to 175 (SIASLSVGEG…SSDATQVSQA (149 aa)). The segment covering 65–83 (STRKSSRGVVRTQRRRRSK) has biased composition (basic residues). Phosphothreonine is present on residues T143 and T233.

The protein is Oxidative stress-responsive serine-rich protein 1 (OSER1) of Pongo abelii (Sumatran orangutan).